A 183-amino-acid chain; its full sequence is Capsid protein (183 aa).

The tract at residues 136–183 (NAPILSTLPETTVVRRRGRSPRRRTPSPRRRRSQSPRRRRSQSPASQC) is disordered. The segment covering 149–176 (VRRRGRSPRRRTPSPRRRRSQSPRRRRS) has biased composition (basic residues). 3 positions are modified to phosphoserine; by host: serine 155, serine 162, and serine 170. The 1; half-length repeat unit spans residues 155–161 (SPRRRTP). The interval 155-177 (SPRRRTPSPRRRRSQSPRRRRSQ) is 3 X 8 AA repeats of S-P-R-R-R-[PR]-S-Q. The short motif at 158-175 (RRTPSPRRRRSQSPRRRR) is the Bipartite nuclear localization signal element. Repeat copies occupy residues 162-169 (SPRRRRSQ) and 170-177 (SPRRRRSQ). The tract at residues 177–183 (QSPASQC) is RNA binding.

The protein belongs to the orthohepadnavirus core antigen family. As to quaternary structure, homodimerizes, then multimerizes. Interacts with cytosol exposed regions of viral L glycoprotein present in the reticulum-to-Golgi compartment. Interacts with human FLNB. Phosphorylated form interacts with host importin alpha; this interaction depends on the exposure of the NLS, which itself depends upon genome maturation and/or phosphorylation of the capsid protein. Interacts with host NUP153. Phosphorylated by host SRPK1, SRPK2, and maybe protein kinase C or GAPDH. Phosphorylation is critical for pregenomic RNA packaging. Protein kinase C phosphorylation is stimulated by HBx protein and may play a role in transport of the viral genome to the nucleus at the late step during the viral replication cycle.

Its subcellular location is the virion. It localises to the host cytoplasm. In terms of biological role, self assembles to form an icosahedral capsid. Most capsids appear to be large particles with an icosahedral symmetry of T=4 and consist of 240 copies of capsid protein, though a fraction forms smaller T=3 particles consisting of 180 capsid proteins. Entering capsids are transported along microtubules to the nucleus. Phosphorylation of the capsid is thought to induce exposure of nuclear localization signal in the C-terminal portion of the capsid protein that allows binding to the nuclear pore complex via the importin (karyopherin-) alpha and beta. Capsids are imported in intact form through the nuclear pore into the nuclear basket, where it probably binds NUP153. Only capsids that contain the mature viral genome can release the viral DNA and capsid protein into the nucleoplasm. Immature capsids get stuck in the basket. Capsids encapsulate the pre-genomic RNA and the P protein. Pre-genomic RNA is reverse-transcribed into DNA while the capsid is still in the cytoplasm. The capsid can then either be directed to the nucleus, providing more genomes for transcription, or bud through the endoplasmic reticulum to provide new virions. The sequence is that of Capsid protein from Hylobatidae (gibbons).